Here is a 102-residue protein sequence, read N- to C-terminus: Protein Tat (102 aa).

Residues 1 to 24 are interaction with human CREBBP; it reads MEPVDPRLEPWKHPGSQPKTACNN. Residues 1–48 form a transactivation region; the sequence is MEPVDPRLEPWKHPGSQPKTACNNCYCKKCCYHCQVCFLTKGLGISYG. Residues cysteine 22, cysteine 25, and cysteine 27 each coordinate Zn(2+). The cysteine-rich stretch occupies residues 22–37; that stretch reads CNNCYCKKCCYHCQVC. Lysine 28 carries the N6-acetyllysine; by host PCAF modification. Residues cysteine 30, histidine 33, cysteine 34, and cysteine 37 each contribute to the Zn(2+) site. Positions 38-48 are core; sequence FLTKGLGISYG. The interval 48 to 102 is disordered; the sequence is GRKKRRQRRGPPQGSQTHQVSLSKQPTSQPRGDPTGPKESKEKVERETETDPAVQ. The Nuclear localization signal, RNA-binding (TAR), and protein transduction signature appears at 49–57; that stretch reads RKKRRQRRG. Positions 49 to 86 are interaction with the host capping enzyme RNGTT; it reads RKKRRQRRGPPQGSQTHQVSLSKQPTSQPRGDPTGPKE. 2 positions are modified to N6-acetyllysine; by host EP300 and GCN5L2: lysine 50 and lysine 51. Arginine 52 and arginine 53 each carry asymmetric dimethylarginine; by host PRMT6. A compositionally biased stretch (polar residues) spans 62 to 77; it reads SQTHQVSLSKQPTSQP. Residue lysine 71 forms a Glycyl lysine isopeptide (Lys-Gly) (interchain with G-Cter in ubiquitin) linkage. A Cell attachment site motif is present at residues 78–80; the sequence is RGD. Residues 83-96 are compositionally biased toward basic and acidic residues; sequence GPKESKEKVERETE.

Belongs to the lentiviruses Tat family. In terms of assembly, interacts with host CCNT1. Associates with the P-TEFb complex composed at least of Tat, P-TEFb (CDK9 and CCNT1), TAR RNA, RNA Pol II. Recruits the HATs CREBBP, TAF1/TFIID, EP300, PCAF and GCN5L2. Interacts with host KAT5/Tip60; this interaction targets the latter to degradation. Interacts with the host deacetylase SIRT1. Interacts with host capping enzyme RNGTT; this interaction stimulates RNGTT. Binds to host KDR, and to the host integrins ITGAV/ITGB3 and ITGA5/ITGB1. Interacts with host KPNB1/importin beta-1 without previous binding to KPNA1/importin alpha-1. Interacts with EIF2AK2. Interacts with host nucleosome assembly protein NAP1L1; this interaction may be required for the transport of Tat within the nucleus, since the two proteins interact at the nuclear rim. Interacts with host C1QBP/SF2P32; this interaction involves lysine-acetylated Tat. Interacts with the host chemokine receptors CCR2, CCR3 and CXCR4. Interacts with host DPP4/CD26; this interaction may trigger an anti-proliferative effect. Interacts with host LDLR. Interacts with the host extracellular matrix metalloproteinase MMP1. Interacts with host PRMT6; this interaction mediates Tat's methylation. Interacts with, and is ubiquitinated by MDM2/Hdm2. Interacts with host PSMC3 and HTATIP2. Interacts with STAB1; this interaction may overcome SATB1-mediated repression of IL2 and IL2RA (interleukin) in T cells by binding to the same domain than HDAC1. Interacts (when acetylated) with human CDK13, thereby increasing HIV-1 mRNA splicing and promoting the production of the doubly spliced HIV-1 protein Nef. Interacts with host TBP; this interaction modulates the activity of transcriptional pre-initiation complex. Interacts with host RELA. Interacts with host PLSCR1; this interaction negatively regulates Tat transactivation activity by altering its subcellular distribution. Post-translationally, asymmetrical arginine methylation by host PRMT6 seems to diminish the transactivation capacity of Tat and affects the interaction with host CCNT1. Acetylation by EP300, CREBBP, GCN5L2/GCN5 and PCAF regulates the transactivation activity of Tat. EP300-mediated acetylation of Lys-50 promotes dissociation of Tat from the TAR RNA through the competitive binding to PCAF's bromodomain. In addition, the non-acetylated Tat's N-terminus can also interact with PCAF. PCAF-mediated acetylation of Lys-28 enhances Tat's binding to CCNT1. Lys-50 is deacetylated by SIRT1. In terms of processing, polyubiquitination by host MDM2 does not target Tat to degradation, but activates its transactivation function and fosters interaction with CCNT1 and TAR RNA. Post-translationally, phosphorylated by EIF2AK2 on serine and threonine residues adjacent to the basic region important for TAR RNA binding and function. Phosphorylation of Tat by EIF2AK2 is dependent on the prior activation of EIF2AK2 by dsRNA.

Its subcellular location is the host nucleus. It localises to the host nucleolus. The protein localises to the host cytoplasm. The protein resides in the secreted. Functionally, transcriptional activator that increases RNA Pol II processivity, thereby increasing the level of full-length viral transcripts. Recognizes a hairpin structure at the 5'-LTR of the nascent viral mRNAs referred to as the transactivation responsive RNA element (TAR) and recruits the cyclin T1-CDK9 complex (P-TEFb complex) that will in turn hyperphosphorylate the RNA polymerase II to allow efficient elongation. The CDK9 component of P-TEFb and other Tat-activated kinases hyperphosphorylate the C-terminus of RNA Pol II that becomes stabilized and much more processive. Other factors such as HTATSF1/Tat-SF1, SUPT5H/SPT5, and HTATIP2 are also important for Tat's function. Besides its effect on RNA Pol II processivity, Tat induces chromatin remodeling of proviral genes by recruiting the histone acetyltransferases (HATs) CREBBP, EP300 and PCAF to the chromatin. This also contributes to the increase in proviral transcription rate, especially when the provirus integrates in transcriptionally silent region of the host genome. To ensure maximal activation of the LTR, Tat mediates nuclear translocation of NF-kappa-B by interacting with host RELA. Through its interaction with host TBP, Tat may also modulate transcription initiation. Tat can reactivate a latently infected cell by penetrating in it and transactivating its LTR promoter. In the cytoplasm, Tat is thought to act as a translational activator of HIV-1 mRNAs. Its function is as follows. Extracellular circulating Tat can be endocytosed by surrounding uninfected cells via the binding to several surface receptors such as CD26, CXCR4, heparan sulfate proteoglycans (HSPG) or LDLR. Neurons are rarely infected, but they internalize Tat via their LDLR. Through its interaction with nuclear HATs, Tat is potentially able to control the acetylation-dependent cellular gene expression. Modulates the expression of many cellular genes involved in cell survival, proliferation or in coding for cytokines or cytokine receptors. Tat plays a role in T-cell and neurons apoptosis. Tat induced neurotoxicity and apoptosis probably contribute to neuroAIDS. Circulating Tat also acts as a chemokine-like and/or growth factor-like molecule that binds to specific receptors on the surface of the cells, affecting many cellular pathways. In the vascular system, Tat binds to ITGAV/ITGB3 and ITGA5/ITGB1 integrins dimers at the surface of endothelial cells and competes with bFGF for heparin-binding sites, leading to an excess of soluble bFGF. The sequence is that of Protein Tat from Human immunodeficiency virus type 1 group M subtype B (isolate RF/HAT3) (HIV-1).